Consider the following 378-residue polypeptide: UDP-N-acetylglucosamine--N-acetylmuramyl-(pentapeptide) pyrophosphoryl-undecaprenol N-acetylglucosamine transferase (378 aa).

UDP-N-acetyl-alpha-D-glucosamine is bound by residues 14 to 16, asparagine 125, arginine 165, serine 193, and glutamine 293; that span reads TGG.

Belongs to the glycosyltransferase 28 family. MurG subfamily.

It localises to the cell inner membrane. It carries out the reaction di-trans,octa-cis-undecaprenyl diphospho-N-acetyl-alpha-D-muramoyl-L-alanyl-D-glutamyl-meso-2,6-diaminopimeloyl-D-alanyl-D-alanine + UDP-N-acetyl-alpha-D-glucosamine = di-trans,octa-cis-undecaprenyl diphospho-[N-acetyl-alpha-D-glucosaminyl-(1-&gt;4)]-N-acetyl-alpha-D-muramoyl-L-alanyl-D-glutamyl-meso-2,6-diaminopimeloyl-D-alanyl-D-alanine + UDP + H(+). Its pathway is cell wall biogenesis; peptidoglycan biosynthesis. Functionally, cell wall formation. Catalyzes the transfer of a GlcNAc subunit on undecaprenyl-pyrophosphoryl-MurNAc-pentapeptide (lipid intermediate I) to form undecaprenyl-pyrophosphoryl-MurNAc-(pentapeptide)GlcNAc (lipid intermediate II). This chain is UDP-N-acetylglucosamine--N-acetylmuramyl-(pentapeptide) pyrophosphoryl-undecaprenol N-acetylglucosamine transferase, found in Bartonella quintana (strain Toulouse) (Rochalimaea quintana).